Reading from the N-terminus, the 2076-residue chain is Protein Ycf2 (2076 aa).

Gly-1458 to Ser-1465 provides a ligand contact to ATP.

This sequence belongs to the Ycf2 family.

The protein resides in the plastid. It localises to the chloroplast stroma. In terms of biological role, probable ATPase of unknown function. Its presence in a non-photosynthetic plant (Epifagus virginiana) and experiments in tobacco indicate that it has an essential function which is probably not related to photosynthesis. The polypeptide is Protein Ycf2 (Acorus calamus (Sweet flag)).